A 209-amino-acid chain; its full sequence is Uracil phosphoribosyltransferase (209 aa).

5-phospho-alpha-D-ribose 1-diphosphate-binding positions include Arg-79, Arg-104, and 131–139; that span reads DPMLATGNS. Uracil is bound by residues Ile-194 and 199-201; that span reads GDA. Asp-200 contributes to the 5-phospho-alpha-D-ribose 1-diphosphate binding site.

It belongs to the UPRTase family. Mg(2+) is required as a cofactor.

It catalyses the reaction UMP + diphosphate = 5-phospho-alpha-D-ribose 1-diphosphate + uracil. Its pathway is pyrimidine metabolism; UMP biosynthesis via salvage pathway; UMP from uracil: step 1/1. With respect to regulation, allosterically activated by GTP. Functionally, catalyzes the conversion of uracil and 5-phospho-alpha-D-ribose 1-diphosphate (PRPP) to UMP and diphosphate. The sequence is that of Uracil phosphoribosyltransferase from Acidovorax sp. (strain JS42).